We begin with the raw amino-acid sequence, 161 residues long: MPSFDTVLETDMVKVKNAVENTSKEIGTRFDFKGTAASIELKDKDITLVGDSDFQIDQINDVLRNKLTKAGVDIRFLDVGKIEKIGGDKVKQVTKVRDGIETEQAKKIQQLIKGSKMKVQAAIQEGKVRVTGAKRDDLQAAMALIRADMKDLPLSFDNFRD.

This sequence belongs to the YajQ family.

Nucleotide-binding protein. The protein is Nucleotide-binding protein Bpro_1596 of Polaromonas sp. (strain JS666 / ATCC BAA-500).